A 190-amino-acid chain; its full sequence is HTH-type transcriptional repressor AcnR (190 aa).

The region spanning 10 to 70 (SMRRQEILEG…ALAREDAARM (61 aa)) is the HTH tetR-type domain. Positions 33–52 (TVRRLEETVGKSRGAIFHHF) form a DNA-binding region, H-T-H motif. Citrate-binding positions include 79–80 (LV), R130, and N134. E181 is a binding site for Mg(2+). R185 contacts citrate.

Homodimer.

Its function is as follows. AcnR negatively controls the expression of the aconitase gene acn. The sequence is that of HTH-type transcriptional repressor AcnR from Corynebacterium diphtheriae (strain ATCC 700971 / NCTC 13129 / Biotype gravis).